A 460-amino-acid chain; its full sequence is MNLVTSKPNVLLNPLFAQLGENRHVLVGFSGGLDSTVLLHLLVCLRQQLIPELNIRAIHIHHGLNPQADSWVKHCMQQCDQWKIELKVVRVNIDPRQNGIEAAARTARYQAFSANLAAKEVLLTAQHLDDQCETFLLALKRGSGPAGLSAMAAKMPFAHSQLLRPLLAFSREILENYAQAQQLQWIEDDSNQDDRFDRNFLRLNVLPILNQRWPHFAQATARSAGLCAEQEQLLDELLAENLQQLQGPDRSLSIDGLLQASMAKRAAILRRWLASLGAPMPSQSQLQRLWLEVAMARQDAEPQLMIGTRQVRRFRQHLYLLMPLAEITTNYLPWATVKAAPNSSIIPLLPEPLWLPADLGVLRFVSAGGQAVRPAAVGEEISVRFGLQGDIKIVGRHHSRQSKKVWQELGIPPWQRERIPLLYFGEQLIAAAGVFVTQAGQANENEPCWHLDWDKPLRLG.

Ser30–Ser35 serves as a coordination point for ATP.

Belongs to the tRNA(Ile)-lysidine synthase family.

The protein resides in the cytoplasm. The enzyme catalyses cytidine(34) in tRNA(Ile2) + L-lysine + ATP = lysidine(34) in tRNA(Ile2) + AMP + diphosphate + H(+). Ligates lysine onto the cytidine present at position 34 of the AUA codon-specific tRNA(Ile) that contains the anticodon CAU, in an ATP-dependent manner. Cytidine is converted to lysidine, thus changing the amino acid specificity of the tRNA from methionine to isoleucine. The protein is tRNA(Ile)-lysidine synthase of Yersinia pestis.